The chain runs to 113 residues: UPF0212 protein MmarC6_1165 (113 aa).

It belongs to the UPF0212 family.

The sequence is that of UPF0212 protein MmarC6_1165 from Methanococcus maripaludis (strain C6 / ATCC BAA-1332).